We begin with the raw amino-acid sequence, 310 residues long: Methionyl-tRNA formyltransferase (310 aa).

(6S)-5,6,7,8-tetrahydrofolate is bound at residue 108-111 (SLLP).

The protein belongs to the Fmt family.

The catalysed reaction is L-methionyl-tRNA(fMet) + (6R)-10-formyltetrahydrofolate = N-formyl-L-methionyl-tRNA(fMet) + (6S)-5,6,7,8-tetrahydrofolate + H(+). Attaches a formyl group to the free amino group of methionyl-tRNA(fMet). The formyl group appears to play a dual role in the initiator identity of N-formylmethionyl-tRNA by promoting its recognition by IF2 and preventing the misappropriation of this tRNA by the elongation apparatus. The chain is Methionyl-tRNA formyltransferase from Fusobacterium nucleatum subsp. nucleatum (strain ATCC 25586 / DSM 15643 / BCRC 10681 / CIP 101130 / JCM 8532 / KCTC 2640 / LMG 13131 / VPI 4355).